A 225-amino-acid chain; its full sequence is 7-cyano-7-deazaguanine synthase (225 aa).

An ATP-binding site is contributed by 9-19 (YSGGLDSTTCL). The Zn(2+) site is built by C188, C198, C201, and C204.

The protein belongs to the QueC family. Requires Zn(2+) as cofactor.

It catalyses the reaction 7-carboxy-7-deazaguanine + NH4(+) + ATP = 7-cyano-7-deazaguanine + ADP + phosphate + H2O + H(+). It participates in purine metabolism; 7-cyano-7-deazaguanine biosynthesis. Catalyzes the ATP-dependent conversion of 7-carboxy-7-deazaguanine (CDG) to 7-cyano-7-deazaguanine (preQ(0)). The polypeptide is 7-cyano-7-deazaguanine synthase (Citrifermentans bemidjiense (strain ATCC BAA-1014 / DSM 16622 / JCM 12645 / Bem) (Geobacter bemidjiensis)).